Here is a 700-residue protein sequence, read N- to C-terminus: Translation initiation factor IF-2 (700 aa).

The segment at K58 to K85 is disordered. The tr-type G domain maps to P191 to D365. The G1 stretch occupies residues G200–T207. Residue G200–T207 participates in GTP binding. The G2 stretch occupies residues G225–S229. Residues D246–G249 are G3. GTP contacts are provided by residues D246 to H250 and N300 to D303. A G4 region spans residues N300–D303. The G5 stretch occupies residues S337–K339.

Belongs to the TRAFAC class translation factor GTPase superfamily. Classic translation factor GTPase family. IF-2 subfamily.

The protein resides in the cytoplasm. One of the essential components for the initiation of protein synthesis. Protects formylmethionyl-tRNA from spontaneous hydrolysis and promotes its binding to the 30S ribosomal subunits. Also involved in the hydrolysis of GTP during the formation of the 70S ribosomal complex. The protein is Translation initiation factor IF-2 of Petrotoga mobilis (strain DSM 10674 / SJ95).